The chain runs to 483 residues: Glutamate--tRNA ligase 1 (483 aa).

Residues 9-19 (PSPTGFLHIGG) carry the 'HIGH' region motif. The short motif at 238 to 242 (KLSKR) is the 'KMSKS' region element. Residue Lys-241 coordinates ATP.

It belongs to the class-I aminoacyl-tRNA synthetase family. Glutamate--tRNA ligase type 1 subfamily. As to quaternary structure, monomer.

It localises to the cytoplasm. The enzyme catalyses tRNA(Glu) + L-glutamate + ATP = L-glutamyl-tRNA(Glu) + AMP + diphosphate. Its function is as follows. Catalyzes the attachment of glutamate to tRNA(Glu) in a two-step reaction: glutamate is first activated by ATP to form Glu-AMP and then transferred to the acceptor end of tRNA(Glu). This chain is Glutamate--tRNA ligase 1, found in Bartonella henselae (strain ATCC 49882 / DSM 28221 / CCUG 30454 / Houston 1) (Rochalimaea henselae).